The primary structure comprises 175 residues: Calcineurin subunit B (175 aa).

EF-hand domains follow at residues 21 to 56, 60 to 88, 90 to 125, and 131 to 166; these read PELM…ANNP, RMIA…FSSK, GRDE…MVGN, and QLQQ…TDIV. Aspartate 34, aspartate 36, serine 38, serine 40, glutamate 45, aspartate 66, aspartate 68, serine 70, threonine 72, glutamate 77, aspartate 103, aspartate 105, aspartate 107, tyrosine 109, glutamate 114, aspartate 144, aspartate 146, aspartate 148, lysine 150, and glutamate 155 together coordinate Ca(2+).

This sequence belongs to the calcineurin regulatory subunit family. As to quaternary structure, composed of a catalytic subunit (A) and a regulatory subunit (B).

In terms of biological role, regulatory subunit of calcineurin, a calcium-dependent, calmodulin stimulated protein phosphatase. Confers calcium sensitivity. Plays a central role in virulence and antifungal drug action. In Cryptococcus neoformans var. neoformans serotype D (strain B-3501A) (Filobasidiella neoformans), this protein is Calcineurin subunit B (CNB1).